The following is a 211-amino-acid chain: Uracil phosphoribosyltransferase (211 aa).

Residues Arg-79, Arg-104, and 131 to 139 (DPMLATGGS) contribute to the 5-phospho-alpha-D-ribose 1-diphosphate site. Uracil-binding positions include Ile-196 and 201-203 (GDA). Residue Asp-202 coordinates 5-phospho-alpha-D-ribose 1-diphosphate.

Belongs to the UPRTase family. It depends on Mg(2+) as a cofactor.

The catalysed reaction is UMP + diphosphate = 5-phospho-alpha-D-ribose 1-diphosphate + uracil. The protein operates within pyrimidine metabolism; UMP biosynthesis via salvage pathway; UMP from uracil: step 1/1. Allosterically activated by GTP. Its function is as follows. Catalyzes the conversion of uracil and 5-phospho-alpha-D-ribose 1-diphosphate (PRPP) to UMP and diphosphate. The sequence is that of Uracil phosphoribosyltransferase from Limosilactobacillus fermentum (strain NBRC 3956 / LMG 18251) (Lactobacillus fermentum).